A 285-amino-acid chain; its full sequence is Bifunctional protein FolD (285 aa).

Residues 166–168, S191, and T232 contribute to the NADP(+) site; that span reads GRS.

This sequence belongs to the tetrahydrofolate dehydrogenase/cyclohydrolase family. Homodimer.

The enzyme catalyses (6R)-5,10-methylene-5,6,7,8-tetrahydrofolate + NADP(+) = (6R)-5,10-methenyltetrahydrofolate + NADPH. It carries out the reaction (6R)-5,10-methenyltetrahydrofolate + H2O = (6R)-10-formyltetrahydrofolate + H(+). Its pathway is one-carbon metabolism; tetrahydrofolate interconversion. Its function is as follows. Catalyzes the oxidation of 5,10-methylenetetrahydrofolate to 5,10-methenyltetrahydrofolate and then the hydrolysis of 5,10-methenyltetrahydrofolate to 10-formyltetrahydrofolate. In Chloroflexus aggregans (strain MD-66 / DSM 9485), this protein is Bifunctional protein FolD.